The following is a 501-amino-acid chain: Glycerol kinase (501 aa).

Residue Thr-11 participates in ADP binding. ATP is bound by residues Thr-11, Thr-12, and Ser-13. A sn-glycerol 3-phosphate-binding site is contributed by Thr-11. Arg-15 lines the ADP pocket. Residues Arg-81, Glu-82, Tyr-133, and Asp-242 each coordinate sn-glycerol 3-phosphate. Residues Arg-81, Glu-82, Tyr-133, Asp-242, and Gln-243 each coordinate glycerol. ADP is bound by residues Thr-264 and Gly-307. ATP contacts are provided by Thr-264, Gly-307, Gln-311, and Gly-409. Gly-409 and Asn-413 together coordinate ADP.

This sequence belongs to the FGGY kinase family.

It carries out the reaction glycerol + ATP = sn-glycerol 3-phosphate + ADP + H(+). It functions in the pathway polyol metabolism; glycerol degradation via glycerol kinase pathway; sn-glycerol 3-phosphate from glycerol: step 1/1. Inhibited by fructose 1,6-bisphosphate (FBP). In terms of biological role, key enzyme in the regulation of glycerol uptake and metabolism. Catalyzes the phosphorylation of glycerol to yield sn-glycerol 3-phosphate. The protein is Glycerol kinase of Borrelia garinii subsp. bavariensis (strain ATCC BAA-2496 / DSM 23469 / PBi) (Borreliella bavariensis).